A 384-amino-acid polypeptide reads, in one-letter code: Urea transporter 1 (384 aa).

Residues 1 to 23 (MDDNPTAVKLDQGGNQAPQGQGR) form a disordered region. Helical transmembrane passes span 61 to 81 (ISQVVFVSNPISGILILVGLL), 85 to 105 (PWCALNGCVGTVVSTLTALLL), 111 to 131 (AITAGLQGYNATLVGILMAIY), 138 to 158 (FWWLLFPVSAMSMTCPIFSSA), and 168 to 188 (LPVFTLPFNMALSMYLSATGH). The N-linked (GlcNAc...) asparagine glycan is linked to Asn206. 3 helical membrane-spanning segments follow: residues 237–257 (GGIFLGAILLSSPLMCLHAAI), 279–299 (GLWGFNSSLACIAIGGMFMAL), and 327–347 (VVGLPSCTWPFCLATLLFLLL).

This sequence belongs to the urea transporter family. As to quaternary structure, homotrimer; each subunit contains a pore through which urea permeates. Identified in a complex with STOM.

Its subcellular location is the cell membrane. It localises to the basolateral cell membrane. It carries out the reaction urea(in) = urea(out). Mediates the transport of urea driven by a concentration gradient across the cell membranes of erythrocytes and the renal inner medullary collecting duct which is critical to the urinary concentrating mechanism. Facilitates water transport in erythrocytes. This chain is Urea transporter 1 (SLC14A1), found in Capra hircus (Goat).